The following is a 319-amino-acid chain: GATA transcription factor 18 (319 aa).

Low complexity predominate over residues 1–15 (MPDAAAAAAAAQDAD). A disordered region spans residues 1–74 (MPDAAAAAAA…AAPEPVSALL (74 aa)). The span at 31 to 60 (DNDDDDGDDGTEEDEEEDDDEEGDEEELPP) shows a compositional bias: acidic residues. In terms of domain architecture, Tify spans 74 to 109 (LPGSPNQLTLLFQGEVYVFESVTPEKVQAVLLLLGR). The 43-residue stretch at 143–185 (RVASLIRFREKRKERNFDKKIRYAVRKEVALRMQRRKGQFAGR) folds into the CCT domain. The GATA-type zinc-finger motif lies at 215-242 (CQNCGTSEKMTPAMRRGPAGPRTLCNAC). Residues 292-319 (ITASHGEVMGDSTPANEAEIGAPKAQSQ) are disordered.

Belongs to the type IV zinc-finger family. Class C subfamily.

Its subcellular location is the nucleus. Transcriptional activator that specifically binds 5'-GATA-3' or 5'-GAT-3' motifs within gene promoters. In Oryza sativa subsp. japonica (Rice), this protein is GATA transcription factor 18.